We begin with the raw amino-acid sequence, 802 residues long: Exocyst complex component 6 (802 aa).

This sequence belongs to the SEC15 family. The exocyst complex is composed of EXOC1, EXOC2, EXOC3, EXOC4, EXOC5, EXOC6, EXOC7 and EXOC8. Interacts with CNTRL. Interacts with RAB11A in a GTP-dependent manner.

The protein localises to the cytoplasm. It is found in the perinuclear region. Its subcellular location is the cell projection. It localises to the growth cone. The protein resides in the midbody. The protein localises to the midbody ring. Functionally, component of the exocyst complex involved in the docking of exocytic vesicles with fusion sites on the plasma membrane. Together with RAB11A, RAB3IP, RAB8A, PARD3, PRKCI, ANXA2, CDC42 and DNMBP promotes transcytosis of PODXL to the apical membrane initiation sites (AMIS), apical surface formation and lumenogenesis. The polypeptide is Exocyst complex component 6 (Exoc6) (Mus musculus (Mouse)).